We begin with the raw amino-acid sequence, 40 residues long: Ferredoxin-2 (40 aa).

Positions 3–40 (YNIKLITPEGTKEITCSDSEYILDAAEEKGLDLPYSCR) constitute a 2Fe-2S ferredoxin-type domain. Cys-39 provides a ligand contact to [2Fe-2S] cluster.

The protein belongs to the 2Fe2S plant-type ferredoxin family. Requires [2Fe-2S] cluster as cofactor.

The protein localises to the plastid. Its subcellular location is the chloroplast. Functionally, ferredoxins are iron-sulfur proteins that transfer electrons in a wide variety of metabolic reactions. The sequence is that of Ferredoxin-2 from Pisum sativum (Garden pea).